Here is a 354-residue protein sequence, read N- to C-terminus: Biotin synthase (354 aa).

Positions 64-282 (GDVELATLLS…IAVARITMPR (219 aa)) constitute a Radical SAM core domain. The [4Fe-4S] cluster site is built by C79, C83, and C86. [2Fe-2S] cluster-binding residues include C123, C154, C214, and R286.

This sequence belongs to the radical SAM superfamily. Biotin synthase family. Homodimer. It depends on [4Fe-4S] cluster as a cofactor. Requires [2Fe-2S] cluster as cofactor.

The enzyme catalyses (4R,5S)-dethiobiotin + (sulfur carrier)-SH + 2 reduced [2Fe-2S]-[ferredoxin] + 2 S-adenosyl-L-methionine = (sulfur carrier)-H + biotin + 2 5'-deoxyadenosine + 2 L-methionine + 2 oxidized [2Fe-2S]-[ferredoxin]. It functions in the pathway cofactor biosynthesis; biotin biosynthesis; biotin from 7,8-diaminononanoate: step 2/2. Its function is as follows. Catalyzes the conversion of dethiobiotin (DTB) to biotin by the insertion of a sulfur atom into dethiobiotin via a radical-based mechanism. In Paracidovorax citrulli (strain AAC00-1) (Acidovorax citrulli), this protein is Biotin synthase.